A 266-amino-acid chain; its full sequence is HLA class II histocompatibility antigen, DR beta 3 chain (266 aa).

The signal sequence occupies residues 1 to 29; that stretch reads MVCLKLPGGSSLAALTVTLMVLSSRLAFA. Residues 30–124 are beta-1; it reads GDTRPRFLEL…GESFTVQRRV (95 aa). At 30–227 the chain is on the extracellular side; it reads GDTRPRFLEL…RARSESAQSK (198 aa). 2 disulfides stabilise this stretch: cysteine 44–cysteine 108 and cysteine 146–cysteine 202. N-linked (GlcNAc...) asparagine glycosylation is present at asparagine 48. Positions 125–227 are beta-2; it reads HPQVTVYPAK…RARSESAQSK (103 aa). The 89-residue stretch at 126-214 folds into the Ig-like C1-type domain; it reads PQVTVYPAKT…EHPSVTSALT (89 aa). A helical transmembrane segment spans residues 228-248; that stretch reads MLSGVGGFVLGLLFLGAGLFI. Residues 249-266 are Cytoplasmic-facing; it reads YFRNQKGHSGLQPTGFLS.

It belongs to the MHC class II family. As to quaternary structure, heterotrimer that consists of an alpha chain HLA-DRA, a beta chain HLA-DRB1 and a peptide (peptide-MHCII). Newly synthesized alpha and beta chains forms a heterodimer (MHCII) that associates with the CD74/invariant chain (Ii) in the endoplasmic reticulum (ER). Ii is a trimer composed of three subunits and each subunit interacts with one MHCII dimer, blocking the peptide-binding cleft. As a result, MHCII molecules cannot bind peptides present in the ER. The complex of MHCII and CD74/Ii is transported in vesicles from ER to Golgi to lysosomes, where it encounters antigenic peptides generated via proteolysis of endocytosed antigens. MHCII dimers are dissociated from CD74/Ii by the combined action of proteolysis and HLA-DM. Lysosomal enzymes such as cathepsin, degrade CD74/Ii leaving a 24 amino acid remnant called class II-associated Ii or CLIP. Interacts (via the peptide binding cleft) with CLIP; this interaction inhibits antigen peptide binding before entry in the endosomal compartment. The displacement of CLIP and replacement by a high affinity peptide in lysosomes is performed by HLA-DM heterodimer. HLA-DM catalyzes CLIP dissociation from MHCII, stabilizes empty MHCII and mediates the selection of high affinity peptides. Interacts with HLA-DM heterodimer; this interaction is direct. Interacts with TCR (via CDR3). Interacts (via beta-2 domain) with CD4 coreceptor (via Ig-like V-type domain); this interaction is of exceptionally low affinity yet necessary for optimal recognition of antigenic peptides. Post-translationally, ubiquitinated by MARCHF1 and MARCHF8 at Lys-254 leading to sorting into the endosome system and down-regulation of MHC class II. In terms of tissue distribution, expressed in professional APCs: monocyte/macrophages, dendritic cells and B cells (at protein level).

The protein resides in the cell membrane. Its subcellular location is the endoplasmic reticulum membrane. The protein localises to the lysosome membrane. It localises to the late endosome membrane. It is found in the autolysosome membrane. Functionally, a beta chain of antigen-presenting major histocompatibility complex class II (MHCII) molecule. In complex with the alpha chain HLA-DRA, displays antigenic peptides on professional antigen presenting cells (APCs) for recognition by alpha-beta T cell receptor (TCR) on HLA-DRB3-restricted CD4-positive T cells. This guides antigen-specific T-helper effector functions, both antibody-mediated immune response and macrophage activation, to ultimately eliminate the infectious agents and transformed cells. Typically presents extracellular peptide antigens of 10 to 30 amino acids that arise from proteolysis of endocytosed antigens in lysosomes. In the tumor microenvironment, presents antigenic peptides that are primarily generated in tumor-resident APCs likely via phagocytosis of apoptotic tumor cells or macropinocytosis of secreted tumor proteins. Presents peptides derived from intracellular proteins that are trapped in autolysosomes after macroautophagy, a mechanism especially relevant for T cell selection in the thymus and central immune tolerance. The selection of the immunodominant epitopes follows two processing modes: 'bind first, cut/trim later' for pathogen-derived antigenic peptides and 'cut first, bind later' for autoantigens/self-peptides. The anchor residue at position 1 of the peptide N-terminus, usually a large hydrophobic residue, is essential for high affinity interaction with MHCII molecules. In terms of biological role, ALLELE DRB3*01:01: Exclusively presents several immunogenic epitopes derived from C.tetani neurotoxin tetX, playing a significant role in immune recognition and long-term protection. Presents viral epitopes derived from HHV-6B U11, TRX2/U56 and U85 antigens to polyfunctional CD4-positive T cells with cytotoxic activity implicated in control of HHV-6B infection. Its function is as follows. ALLELE DRB3*02:02 Exclusively presents several immunogenic epitopes derived from C.tetani neurotoxin tetX, playing a significant role in immune recognition and long-term protection. Upon EBV infection, presents to CD4-positive T cells latent antigen EBNA2 (PRSPTVFYNIPPMPLPPSQL) and lytic antigen BZLF1 (LTAYHVSTAPTGSWF) peptides, driving oligoclonal expansion and selection of virus-specific memory T cell subsets with cytotoxic potential to directly eliminate virus-infected B cells. Presents viral epitopes derived from HHV-6B U11, gB/U39 and gH/U48 antigens to polyfunctional CD4-positive T cells with cytotoxic activity implicated in control of HHV-6B infection. Plays a minor role in CD4-positive T cell immune response against Dengue virus by presenting conserved peptides from capsid and non-structural NS3 proteins. Displays peptides derived from IAV matrix protein M, implying a role in protection against IAV infection. In the context of tumor immunesurveillance, may present to T-helper 1 cells an immunogenic epitope derived from tumor-associated antigen WT1 (KRYFKLSHLQMHSRKH), likely providing for effective antitumor immunity in a wide range of solid and hematological malignancies. Presents to Vbeta2-positive T-helper 1 cells specifically an immunodominant peptide derived from tumor antigen CTAG1A/NY-ESO-1(PGVLLKEFTVSGNILTIRLTAADHR) and confers protective memory response. In metastatic epithelial tumors, presents to intratumoral CD4-positive T cells a TP53 neoantigen (HYNYMCNSSCMGSMNRRPILTIITL) carrying G245S hotspot driver mutation and may mediate tumor regression. ALLELE DRB3*03:01: Presents a series of conserved peptides derived from the M.tuberculosis PPE family of proteins, in particular PPE29 and PPE33, known to be highly immunogenic. Presents immunogenic epitopes derived from C.tetani neurotoxin tetX, playing a role in immune recognition and long-term protection. Displays immunodominant viral peptides from HCV non-structural protein NS2, as part of a broad range T-helper response to resolve infection. The sequence is that of HLA class II histocompatibility antigen, DR beta 3 chain (HLA-DRB3) from Homo sapiens (Human).